We begin with the raw amino-acid sequence, 235 residues long: Purine nucleoside phosphorylase DeoD-type (235 aa).

Position 4 (His-4) interacts with a purine D-ribonucleoside. Phosphate-binding positions include Gly-20, Arg-24, Arg-43, and Arg-87 to Thr-90. A purine D-ribonucleoside contacts are provided by residues Glu-162, Glu-179–Glu-181, and Ser-203–Asp-204. The active-site Proton donor is the Asp-204.

Belongs to the PNP/UDP phosphorylase family. In terms of assembly, homohexamer; trimer of homodimers.

The catalysed reaction is a purine D-ribonucleoside + phosphate = a purine nucleobase + alpha-D-ribose 1-phosphate. It carries out the reaction a purine 2'-deoxy-D-ribonucleoside + phosphate = a purine nucleobase + 2-deoxy-alpha-D-ribose 1-phosphate. Its function is as follows. Catalyzes the reversible phosphorolytic breakdown of the N-glycosidic bond in the beta-(deoxy)ribonucleoside molecules, with the formation of the corresponding free purine bases and pentose-1-phosphate. The sequence is that of Purine nucleoside phosphorylase DeoD-type from Bacillus cereus (strain B4264).